The primary structure comprises 194 residues: MYKKIISSELDAALKILKNFLKNEEQIENIEKAAILIAKSFKNKNKVISCGNGGSHCDAVHFSEELTGLYREKRPGYAAIPISDVGHISAIGNDFGYDQIFSRYIESIGLPNDVLLAISTSGNSINIINAIQTAHRKKMKVIVLTGNDGGQVKHLSDVEICIPYHGYSDRIQEMHIKIIHILILIIEKEMKKIN.

One can recognise an SIS domain in the interval 37–194; that stretch reads IAKSFKNKNK…IIEKEMKKIN (158 aa). 52–54 contacts substrate; it reads NGG. Residues His-61 and Glu-65 each contribute to the Zn(2+) site. Residues Glu-65, 93-94, 119-121, Ser-124, and Gln-172 each bind substrate; these read ND and STS. Positions 172 and 180 each coordinate Zn(2+).

This sequence belongs to the SIS family. GmhA subfamily. Homotetramer. Zn(2+) serves as cofactor.

It localises to the cytoplasm. The enzyme catalyses 2 D-sedoheptulose 7-phosphate = D-glycero-alpha-D-manno-heptose 7-phosphate + D-glycero-beta-D-manno-heptose 7-phosphate. Its pathway is carbohydrate biosynthesis; D-glycero-D-manno-heptose 7-phosphate biosynthesis; D-glycero-alpha-D-manno-heptose 7-phosphate and D-glycero-beta-D-manno-heptose 7-phosphate from sedoheptulose 7-phosphate: step 1/1. Catalyzes the isomerization of sedoheptulose 7-phosphate in D-glycero-D-manno-heptose 7-phosphate. This chain is Phosphoheptose isomerase, found in Buchnera aphidicola subsp. Schizaphis graminum (strain Sg).